The following is a 399-amino-acid chain: ATP phosphoribosyltransferase regulatory subunit (399 aa).

This sequence belongs to the class-II aminoacyl-tRNA synthetase family. HisZ subfamily. Heteromultimer composed of HisG and HisZ subunits.

The protein resides in the cytoplasm. It functions in the pathway amino-acid biosynthesis; L-histidine biosynthesis; L-histidine from 5-phospho-alpha-D-ribose 1-diphosphate: step 1/9. Functionally, required for the first step of histidine biosynthesis. May allow the feedback regulation of ATP phosphoribosyltransferase activity by histidine. In Symbiobacterium thermophilum (strain DSM 24528 / JCM 14929 / IAM 14863 / T), this protein is ATP phosphoribosyltransferase regulatory subunit.